The chain runs to 432 residues: MRVVILGSGVVGVASAWYLNQAGHEVTVIDREPGAALETSAANAGQISPGYAAPWAAPGVPLKAIKWMFQRHAPLAVRLDGTQFQLKWMWQMLRNCDTSHYMENKGRMVRLAEYSRDCLKALRAETNIQYEGRQGGTLQLFRTEQQYENATRDIAVLEDAGVPYQLLESSRLAEVEPALAEVAHKLTGGLQLPNDETGDCQLFTQNLARMAEQAGVKFRFNTPVDQLLCDGEQIYGVKCGDEVIKADAYVMAFGSYSTAMLKGIVDIPVYPLKGYSLTIPIAQEDGAPVSTILDETYKIAITRFDNRIRVGGMAEIVGFNTELLQPRRETLEMVVRDLYPRGGHVEQATFWTGLRPMTPDGTPVVGRTRFKNLWLNTGHGTLGWTMACGSGQLLSDLLSGRTPAIPYEDLSVARYSRGFTPLRPGHLHGAHS.

3-17 (VVILGSGVVGVASAW) lines the FAD pocket.

Belongs to the DadA oxidoreductase family. Requires FAD as cofactor.

It carries out the reaction a D-alpha-amino acid + A + H2O = a 2-oxocarboxylate + AH2 + NH4(+). Its pathway is amino-acid degradation; D-alanine degradation; NH(3) and pyruvate from D-alanine: step 1/1. Functionally, oxidative deamination of D-amino acids. This chain is D-amino acid dehydrogenase, found in Escherichia coli O45:K1 (strain S88 / ExPEC).